Here is a 594-residue protein sequence, read N- to C-terminus: CTP synthase (594 aa).

The tract at residues 1-272 is amidoligase domain; that stretch reads MARPKNVKYV…DLRVLKKLGL (272 aa). Serine 18 serves as a coordination point for CTP. Residue serine 18 participates in UTP binding. Residue 19–24 participates in ATP binding; sequence SLGKGI. Tyrosine 59 provides a ligand contact to L-glutamine. Residue aspartate 76 coordinates ATP. Residues aspartate 76 and glutamate 146 each coordinate Mg(2+). Residues 153-155, 193-198, and lysine 229 contribute to the CTP site; these read DIE and KTKPTQ. Residues 193 to 198 and lysine 229 contribute to the UTP site; that span reads KTKPTQ. The Glutamine amidotransferase type-1 domain maps to 299–543; it reads TIVVCGKYTE…VGAAKSYAAV (245 aa). L-glutamine is bound at residue glycine 363. Catalysis depends on cysteine 390, which acts as the Nucleophile; for glutamine hydrolysis. L-glutamine contacts are provided by residues 391 to 394, glutamate 414, and arginine 471; that span reads LGMQ. Catalysis depends on residues histidine 516 and glutamate 518. Low complexity predominate over residues 562–571; it reads AEAYAAYSEE. The disordered stretch occupies residues 562–594; that stretch reads AEAYAAYSEESSAESKSFFPDNGGHDEERDSGQ. A compositionally biased stretch (basic and acidic residues) spans 584–594; it reads GGHDEERDSGQ.

It belongs to the CTP synthase family. As to quaternary structure, homotetramer.

It carries out the reaction UTP + L-glutamine + ATP + H2O = CTP + L-glutamate + ADP + phosphate + 2 H(+). The catalysed reaction is L-glutamine + H2O = L-glutamate + NH4(+). The enzyme catalyses UTP + NH4(+) + ATP = CTP + ADP + phosphate + 2 H(+). Its pathway is pyrimidine metabolism; CTP biosynthesis via de novo pathway; CTP from UDP: step 2/2. Allosterically activated by GTP, when glutamine is the substrate; GTP has no effect on the reaction when ammonia is the substrate. The allosteric effector GTP functions by stabilizing the protein conformation that binds the tetrahedral intermediate(s) formed during glutamine hydrolysis. Inhibited by the product CTP, via allosteric rather than competitive inhibition. In terms of biological role, catalyzes the ATP-dependent amination of UTP to CTP with either L-glutamine or ammonia as the source of nitrogen. Regulates intracellular CTP levels through interactions with the four ribonucleotide triphosphates. The chain is CTP synthase from Chlorobium phaeovibrioides (strain DSM 265 / 1930) (Prosthecochloris vibrioformis (strain DSM 265)).